A 364-amino-acid polypeptide reads, in one-letter code: GDP-perosamine synthase (364 aa).

The residue at position 183 (Lys-183) is an N6-(pyridoxal phosphate)lysine.

It belongs to the DegT/DnrJ/EryC1 family. In terms of assembly, homodecamer. Requires pyridoxal 5'-phosphate as cofactor.

It carries out the reaction GDP-alpha-D-perosamine + 2-oxoglutarate = GDP-4-dehydro-alpha-D-rhamnose + L-glutamate. It functions in the pathway bacterial outer membrane biogenesis; LPS O-antigen biosynthesis. Divalent ions have no significant effect on activity. Catalyzes the synthesis of GDP-perosamine from GDP-4-keto-6-deoxy-D-mannose and L-glutamate. Can use only L-glutamate as amino donor. The polypeptide is GDP-perosamine synthase (Escherichia coli O157:H7).